Consider the following 96-residue polypeptide: uncharacterized protein (96 aa).

The helical transmembrane segment at 53–71 (VLLMPLLQSFVLSLALMGV) threads the bilayer.

The protein resides in the membrane. This is an uncharacterized protein from Saccharomyces cerevisiae (strain ATCC 204508 / S288c) (Baker's yeast).